A 503-amino-acid chain; its full sequence is Cytochrome c-552 (503 aa).

Positions 1–16 (MKKNTIILVGALIAIA) are cleaved as a signal peptide. Residue histidine 102 participates in heme c binding. Heme contacts are provided by cysteine 130, cysteine 133, and lysine 134. 6 residues coordinate heme c: cysteine 168, cysteine 171, histidine 172, cysteine 210, cysteine 213, and histidine 214. Ca(2+) is bound by residues glutamate 216, tyrosine 217, lysine 273, and glutamine 275. Residue tyrosine 217 coordinates substrate. Histidine 276 contacts substrate. Heme c contacts are provided by histidine 287, cysteine 294, cysteine 297, histidine 298, histidine 312, cysteine 325, cysteine 328, histidine 329, and histidine 404.

This sequence belongs to the cytochrome c-552 family. Ca(2+) is required as a cofactor. Heme c serves as cofactor.

The protein resides in the periplasm. It catalyses the reaction 6 Fe(III)-[cytochrome c] + NH4(+) + 2 H2O = 6 Fe(II)-[cytochrome c] + nitrite + 8 H(+). Its pathway is nitrogen metabolism; nitrate reduction (assimilation). Catalyzes the reduction of nitrite to ammonia, consuming six electrons in the process. This is Cytochrome c-552 from Maridesulfovibrio salexigens (strain ATCC 14822 / DSM 2638 / NCIMB 8403 / VKM B-1763) (Desulfovibrio salexigens).